The chain runs to 307 residues: Thioredoxin-related transmembrane protein 2-B (307 aa).

The signal sequence occupies residues 1–19 (MALLTPLFAFLYHLPQVYK). Over 20–111 (WLLKPYYIAS…VILFFRLDIR (92 aa)) the chain is Extracellular. A helical membrane pass occupies residues 112–132 (LGLLYLTLCIVFLMTCKPPLY). Positions 132-269 (YMGPEYIKYF…LYQKSKKLGK (138 aa)) constitute a Thioredoxin domain. Residues 133 to 307 (MGPEYIKYFS…AMDTESKKDK (175 aa)) lie on the Cytoplasmic side of the membrane. The disordered stretch occupies residues 268-307 (GKTKEKLERPSELVFSTVPEEEEPEAETISAMDTESKKDK). Basic and acidic residues predominate over residues 269–278 (KTKEKLERPS). Residues 304-307 (KKDK) carry the Di-lysine motif motif.

Monomer. Homodimer; disulfide-linked. Occurs in both reduced and oxidized monomeric form. Oxidative conditions increase homodimerization.

It is found in the endoplasmic reticulum membrane. It localises to the mitochondrion membrane. Functionally, endoplasmic reticulum and mitochondria-associated protein that probably functions as a regulator of cellular redox state and thereby regulates protein post-translational modification, protein folding and mitochondrial activity. This Danio rerio (Zebrafish) protein is Thioredoxin-related transmembrane protein 2-B (tmx2b).